Here is a 295-residue protein sequence, read N- to C-terminus: MLILPTVKGEYQKDYNLKHLTWFKVGGDAEIFFKPLDSEDLASFLIQNRQKLPITTFGAGSNIIIRDGGIEGVVIKLGQNFSNIEFIDNHLIVGSSCLNYNLAKFCQANDISGFEFLVGIPGTIGGGVAMNAGAYGSEFKDIIVRIEAIDFAGNFRTFTNAESGFKYRGNNLPKDLIILKAVFKVNKGDSENILLRMNEINNTRSLTQPIKERTGGSTFANPEGLKSWELIDKAGLRGYRIGGASMSELHCNFMINNGDATSKDLEDLGDFVRQKVFEDSGVELKWEIKIIGKYV.

The FAD-binding PCMH-type domain occupies 24-188 (KVGGDAEIFF…LKAVFKVNKG (165 aa)). The active site involves Arg168. Ser217 functions as the Proton donor in the catalytic mechanism. Residue Glu287 is part of the active site.

This sequence belongs to the MurB family. FAD is required as a cofactor.

It is found in the cytoplasm. The enzyme catalyses UDP-N-acetyl-alpha-D-muramate + NADP(+) = UDP-N-acetyl-3-O-(1-carboxyvinyl)-alpha-D-glucosamine + NADPH + H(+). It functions in the pathway cell wall biogenesis; peptidoglycan biosynthesis. In terms of biological role, cell wall formation. The sequence is that of UDP-N-acetylenolpyruvoylglucosamine reductase from Rickettsia akari (strain Hartford).